Consider the following 380-residue polypeptide: Guanine nucleotide-binding protein alpha-1 subunit (380 aa).

The disordered stretch occupies residues 1–25 (MGSSCSRSHSLSEAETTKNAKSADI). Gly-2 is lipidated: N-myristoyl glycine. Cys-5 carries S-palmitoyl cysteine lipidation. Residues 10-25 (SLSEAETTKNAKSADI) are compositionally biased toward basic and acidic residues. The region spanning 38–380 (HIHKLLLLGA…ESMRRSREGT (343 aa)) is the G-alpha domain. The tract at residues 41-54 (KLLLLGAGESGKST) is G1 motif. Residues Glu-49, Ser-50, Gly-51, Lys-52, Ser-53, Thr-54, Asp-163, Leu-188, Tyr-189, Thr-194, Gly-222, Asn-288, Lys-289, Asp-291, and Ala-356 each coordinate GTP. Ser-53 contributes to the Mg(2+) binding site. Residues 186-194 (DVLYARVRT) form a G2 motif region. Thr-194 contacts Mg(2+). Residues 215 to 224 (YRLYDVGGQR) form a G3 motif region. The tract at residues 284–291 (ILFLNKFD) is G4 motif. A G5 motif region spans residues 354-359 (TTALDQ).

Belongs to the G-alpha family. G proteins are composed of 3 units; alpha, beta and gamma. The alpha chain contains the guanine nucleotide binding site. Interacts with COLD1. It depends on Mg(2+) as a cofactor.

The protein resides in the cell membrane. Its function is as follows. Guanine nucleotide-binding proteins (G proteins) are involved as modulators or transducers in various transmembrane signaling systems. May function in a signal transduction pathway required for normal growth and development of internodes, leaves, panicles and seeds. Involved in gibberellin signal transduction. Involved in R gene-mediated disease resistance. Functions upstream of the small GTPase RAC1 in the early steps of signaling. Involved in brassinosteroid response. May not be a signaling molecule in BRI1-mediated perception or transduction. The protein is Guanine nucleotide-binding protein alpha-1 subunit (GPA1) of Oryza sativa subsp. indica (Rice).